The primary structure comprises 235 residues: Ubiquinone/menaquinone biosynthesis C-methyltransferase UbiE (235 aa).

Residues Thr59, Asp84, and Ser123 each contribute to the S-adenosyl-L-methionine site.

The protein belongs to the class I-like SAM-binding methyltransferase superfamily. MenG/UbiE family.

It carries out the reaction a 2-demethylmenaquinol + S-adenosyl-L-methionine = a menaquinol + S-adenosyl-L-homocysteine + H(+). The enzyme catalyses a 2-methoxy-6-(all-trans-polyprenyl)benzene-1,4-diol + S-adenosyl-L-methionine = a 5-methoxy-2-methyl-3-(all-trans-polyprenyl)benzene-1,4-diol + S-adenosyl-L-homocysteine + H(+). It participates in quinol/quinone metabolism; menaquinone biosynthesis; menaquinol from 1,4-dihydroxy-2-naphthoate: step 2/2. The protein operates within cofactor biosynthesis; ubiquinone biosynthesis. Functionally, methyltransferase required for the conversion of demethylmenaquinol (DMKH2) to menaquinol (MKH2) and the conversion of 2-polyprenyl-6-methoxy-1,4-benzoquinol (DDMQH2) to 2-polyprenyl-3-methyl-6-methoxy-1,4-benzoquinol (DMQH2). The chain is Ubiquinone/menaquinone biosynthesis C-methyltransferase UbiE from Campylobacter jejuni subsp. jejuni serotype O:23/36 (strain 81-176).